A 366-amino-acid chain; its full sequence is Cytochrome c peroxidase, mitochondrial (366 aa).

The transit peptide at 1-46 directs the protein to the mitochondrion; it reads MASAARSASRAFLRSTPTTSSFRPAVRAARFALPAQGFRAAGRRGY. Residue H127 is the Proton acceptor of the active site. H250 contacts heme b. The active-site Tryptophan radical intermediate is W266.

The protein belongs to the peroxidase family. Cytochrome c peroxidase subfamily. In terms of assembly, forms a one-to-one complex with cytochrome c. Heme b serves as cofactor.

The protein localises to the mitochondrion matrix. It is found in the mitochondrion intermembrane space. The enzyme catalyses 2 Fe(II)-[cytochrome c] + H2O2 + 2 H(+) = 2 Fe(III)-[cytochrome c] + 2 H2O. Its function is as follows. Destroys radicals which are normally produced within the cells and which are toxic to biological systems. The polypeptide is Cytochrome c peroxidase, mitochondrial (ccp1) (Aspergillus fumigatus (strain ATCC MYA-4609 / CBS 101355 / FGSC A1100 / Af293) (Neosartorya fumigata)).